The sequence spans 151 residues: SsrA-binding protein (151 aa).

It belongs to the SmpB family.

The protein resides in the cytoplasm. In terms of biological role, required for rescue of stalled ribosomes mediated by trans-translation. Binds to transfer-messenger RNA (tmRNA), required for stable association of tmRNA with ribosomes. tmRNA and SmpB together mimic tRNA shape, replacing the anticodon stem-loop with SmpB. tmRNA is encoded by the ssrA gene; the 2 termini fold to resemble tRNA(Ala) and it encodes a 'tag peptide', a short internal open reading frame. During trans-translation Ala-aminoacylated tmRNA acts like a tRNA, entering the A-site of stalled ribosomes, displacing the stalled mRNA. The ribosome then switches to translate the ORF on the tmRNA; the nascent peptide is terminated with the 'tag peptide' encoded by the tmRNA and targeted for degradation. The ribosome is freed to recommence translation, which seems to be the essential function of trans-translation. The chain is SsrA-binding protein from Campylobacter concisus (strain 13826).